Reading from the N-terminus, the 362-residue chain is Probable tocopherol O-methyltransferase, chloroplastic (362 aa).

Residues 1 to 55 (MAHAAAATGALAPLHPLLRCTSRHLCASASPRAGLCLHHHRRRRRSSRRTKLAVR) constitute a chloroplast transit peptide. The interval 141–150 (VVDVGCGIGG) is SAM motif I. An SAM motif II region spans residues 204 to 212 (GQFDLVWSM). Residues 231–240 (VAAPGARIII) form an SAM motif III region.

It belongs to the class I-like SAM-binding methyltransferase superfamily. gTMT family.

The protein resides in the plastid. The protein localises to the chloroplast. It carries out the reaction gamma-tocopherol + S-adenosyl-L-methionine = (+)-alpha-tocopherol + S-adenosyl-L-homocysteine + H(+). It catalyses the reaction delta-tocotrienol + S-adenosyl-L-methionine = beta-tocotrienol + S-adenosyl-L-homocysteine + H(+). The enzyme catalyses gamma-tocotrienol + S-adenosyl-L-methionine = alpha-tocotrienol + S-adenosyl-L-homocysteine + H(+). The catalysed reaction is delta-tocopherol + S-adenosyl-L-methionine = beta-tocopherol + S-adenosyl-L-homocysteine + H(+). Its pathway is cofactor biosynthesis; tocopherol biosynthesis. Involved in the synthesis of tocopherol (vitamin E). Methylates gamma- and delta-tocopherol to form beta- and alpha-tocopherol, respectively. This chain is Probable tocopherol O-methyltransferase, chloroplastic (VTE4), found in Oryza sativa subsp. japonica (Rice).